The following is a 103-amino-acid chain: Co-chaperonin GroES (103 aa).

Belongs to the GroES chaperonin family. Heptamer of 7 subunits arranged in a ring. Interacts with the chaperonin GroEL.

It localises to the cytoplasm. Together with the chaperonin GroEL, plays an essential role in assisting protein folding. The GroEL-GroES system forms a nano-cage that allows encapsulation of the non-native substrate proteins and provides a physical environment optimized to promote and accelerate protein folding. GroES binds to the apical surface of the GroEL ring, thereby capping the opening of the GroEL channel. The sequence is that of Co-chaperonin GroES from Parasynechococcus marenigrum (strain WH8102).